The sequence spans 246 residues: Deoxycytidylate 5-hydroxymethyltransferase (246 aa).

Residue Cys148 is part of the active site.

It belongs to the thymidylate synthase family.

It carries out the reaction dCMP + (6R)-5,10-methylene-5,6,7,8-tetrahydrofolate + H2O = 5-hydroxymethyl-dCMP + (6S)-5,6,7,8-tetrahydrofolate. In Enterobacteria phage T6 (Bacteriophage T6), this protein is Deoxycytidylate 5-hydroxymethyltransferase (42).